The following is a 1019-amino-acid chain: Protein HIRA (1019 aa).

7 WD repeats span residues 11–53, 68–107, 129–168, 172–211, 220–263, 266–322, and 326–367; these read HNGK…KEED, NHLA…GPST, SHSG…EILA, GHSG…LETS, GGTT…TNMD, GHRK…PLVV, and LFDK…DPLS. The tract at residues 23 to 443 is interaction with RBBP4; the sequence is PDGTKFATGG…ASMVNGESLE (421 aa). 2 stretches are compositionally biased toward low complexity: residues 406–415 and 544–561; these read QRQQQQQAEQ and ATSV…VLTT. Disordered stretches follow at residues 406 to 433, 513 to 561, and 599 to 633; these read QRQQ…APKV, ANSL…VLTT, and LKDQ…LSAP. Residues 444-1019 form an interaction with HDAC1 region; sequence DIRKNLLKKQ…TEYQEQLDIL (576 aa). Basic and acidic residues predominate over residues 599 to 625; that stretch reads LKDQNLIKDNKPKDILESSSDSEEKIP. The segment at 960 to 1019 is interaction with HDAC2; the sequence is RLRELCKDLLGPVHYSRGSQWESTVMGLRKRELLKELLPVIGQNLFQRLFTEYQEQLDIL.

It belongs to the WD repeat HIR1 family. In terms of assembly, interacts with ASF1, HDAC1, HDAC2 and RBBP4.

It localises to the nucleus. Its function is as follows. Cooperates with ASF1A to promote replication-independent chromatin assembly. May regulate the transcription of a variety of genes controlling cell growth. The sequence is that of Protein HIRA (HIRA) from Gallus gallus (Chicken).